The following is a 346-amino-acid chain: DNA primase small subunit PriS (346 aa).

Active-site residues include aspartate 97, aspartate 99, and aspartate 280.

The protein belongs to the eukaryotic-type primase small subunit family. Heterodimer of a small subunit (PriS) and a large subunit (PriL). Mg(2+) is required as a cofactor. It depends on Mn(2+) as a cofactor.

Its function is as follows. Catalytic subunit of DNA primase, an RNA polymerase that catalyzes the synthesis of short RNA molecules used as primers for DNA polymerase during DNA replication. The small subunit contains the primase catalytic core and has DNA synthesis activity on its own. Binding to the large subunit stabilizes and modulates the activity, increasing the rate of DNA synthesis while decreasing the length of the DNA fragments, and conferring RNA synthesis capability. The DNA polymerase activity may enable DNA primase to also catalyze primer extension after primer synthesis. May also play a role in DNA repair. The sequence is that of DNA primase small subunit PriS from Thermococcus kodakarensis (strain ATCC BAA-918 / JCM 12380 / KOD1) (Pyrococcus kodakaraensis (strain KOD1)).